Reading from the N-terminus, the 573-residue chain is Probable D-xylulose kinase A (573 aa).

4 residues coordinate substrate: histidine 100, arginine 171, aspartate 287, and asparagine 288. Residues tryptophan 368, glycine 473–glycine 474, and asparagine 477 contribute to the ATP site.

The protein belongs to the FGGY kinase family.

The protein localises to the cytoplasm. The catalysed reaction is D-xylulose + ATP = D-xylulose 5-phosphate + ADP + H(+). Functionally, highly specific D-xylulose kinase which participates in the catabolism of xylose. Xylose is a major component of hemicelluloses such as xylan. Most fungi utilize D-xylose via three enzymatic reactions, xylose reductase (XR), xylitol dehydrogenase (XDH), and xylulokinase, to form xylulose 5-phosphate, which enters pentose phosphate pathway. The chain is Probable D-xylulose kinase A (xkiA) from Aspergillus terreus (strain NIH 2624 / FGSC A1156).